A 138-amino-acid polypeptide reads, in one-letter code: Thyrotropin subunit beta (138 aa).

The first 20 residues, 1 to 20, serve as a signal peptide directing secretion; the sequence is MTALFLMSMLFGLTCGQAMS. Disulfide bonds link C22/C72, C36/C87, C39/C125, C47/C103, C51/C105, and C108/C115. An N-linked (GlcNAc...) asparagine glycan is attached at N43. Positions 133–138 are excised as a propeptide; sequence LVGFSV.

Belongs to the glycoprotein hormones subunit beta family. In terms of assembly, heterodimer of a common alpha chain and a unique beta chain which confers biological specificity to thyrotropin, lutropin, follitropin and gonadotropin.

Its subcellular location is the secreted. Indispensable for the control of thyroid structure and metabolism. The chain is Thyrotropin subunit beta (TSHB) from Homo sapiens (Human).